A 201-amino-acid polypeptide reads, in one-letter code: Large ribosomal subunit protein bL25 (201 aa).

The interval 179 to 201 (VSITAPRVEAEKTEEEEPESTEE) is disordered. A compositionally biased stretch (acidic residues) spans 190-201 (KTEEEEPESTEE).

This sequence belongs to the bacterial ribosomal protein bL25 family. CTC subfamily. As to quaternary structure, part of the 50S ribosomal subunit; part of the 5S rRNA/L5/L18/L25 subcomplex. Contacts the 5S rRNA. Binds to the 5S rRNA independently of L5 and L18.

Functionally, this is one of the proteins that binds to the 5S RNA in the ribosome where it forms part of the central protuberance. The sequence is that of Large ribosomal subunit protein bL25 from Prosthecochloris aestuarii (strain DSM 271 / SK 413).